The following is a 406-amino-acid chain: MAKGEFIRTKPHVNVGTIGHVDHGKTTLTAALTYVAAAENPNVEVKDYGDIDKAPEERARGITINTAHVEYETAKRHYSHVDCPGHADYIKNMITGAAQMDGAILVVSAADGPMPQTREHILLARQVGVPYIVVFMNKVDMVDDPELLDLVEMEVRDLLNQYEFPGDEVPVIRGSALLALEEMHKNPKTKRGENEWVDKIWELLDAIDEYIPTPVRDVDKPFLMPVEDVFTITGRGTVATGRIERGKVKVGDEVEIVGLAPETRKTVVTGVEMHRKTLQEGIAGDNVGLLLRGVSREEVERGQVLAKPGSITPHTKFEASVYILKKEEGGRHTGFFTGYRPQFYFRTTDVTGVVRLPQGVEMVMPGDNVTFTVELIKPVALEEGLRFAIREGGRTVGAGVVTKILE.

Residues 10 to 215 (KPHVNVGTIG…AIDEYIPTPV (206 aa)) form the tr-type G domain. The interval 19 to 26 (GHVDHGKT) is G1. 19–26 (GHVDHGKT) is a binding site for GTP. T26 is a binding site for Mg(2+). A G2 region spans residues 61 to 65 (GITIN). The tract at residues 82–85 (DCPG) is G3. Residues 82-86 (DCPGH) and 137-140 (NKVD) contribute to the GTP site. The interval 137 to 140 (NKVD) is G4. The tract at residues 175–177 (SAL) is G5.

Belongs to the TRAFAC class translation factor GTPase superfamily. Classic translation factor GTPase family. EF-Tu/EF-1A subfamily. As to quaternary structure, monomer.

Its subcellular location is the cytoplasm. It carries out the reaction GTP + H2O = GDP + phosphate + H(+). GTP hydrolase that promotes the GTP-dependent binding of aminoacyl-tRNA to the A-site of ribosomes during protein biosynthesis. This chain is Elongation factor Tu, found in Thermus aquaticus.